We begin with the raw amino-acid sequence, 171 residues long: Lipoprotein signal peptidase (171 aa).

Helical transmembrane passes span 12 to 32 (WYWV…WVLA), 67 to 87 (WQRW…TVWL), and 93 to 113 (SLLK…GNLV). Catalysis depends on residues Asp123 and Asp141. The chain crosses the membrane as a helical span at residues 137–157 (FNIADSAICIGAVLIIWDAFL).

It belongs to the peptidase A8 family.

The protein resides in the cell inner membrane. It catalyses the reaction Release of signal peptides from bacterial membrane prolipoproteins. Hydrolyzes -Xaa-Yaa-Zaa-|-(S,diacylglyceryl)Cys-, in which Xaa is hydrophobic (preferably Leu), and Yaa (Ala or Ser) and Zaa (Gly or Ala) have small, neutral side chains.. The protein operates within protein modification; lipoprotein biosynthesis (signal peptide cleavage). Its function is as follows. This protein specifically catalyzes the removal of signal peptides from prolipoproteins. This Shewanella baltica (strain OS223) protein is Lipoprotein signal peptidase.